Reading from the N-terminus, the 1850-residue chain is Voltage-dependent L-type calcium channel subunit alpha-1S (1850 aa).

The interval 1–23 is disordered; it reads MEPSSPQDEGLRKKQPKKPVPEI. Topologically, residues 1–51 are cytoplasmic; that stretch reads MEPSSPQDEGLRKKQPKKPVPEILPRPPRALFCLTLQNPLRKACISVVEWK. One copy of the I repeat lies at 38 to 337; sequence NPLRKACISV…LVLGVLSGEF (300 aa). Residues 52 to 70 form a helical membrane-spanning segment; that stretch reads PFETIILLTIFANCVALAV. The Extracellular portion of the chain corresponds to 71–85; it reads YLPMPEDDNNTLNLG. Residues 86–106 traverse the membrane as a helical segment; sequence LEKLEYFFLIVFSIEAAMKII. Residues 107 to 115 are Cytoplasmic-facing; sequence AYGFLFHQD. A helical transmembrane segment spans residues 116–136; the sequence is AYLRSGWNVLDFIIVFLGVFT. Over 137 to 160 the chain is Extracellular; it reads AILEQVNIIQTNTAPMSSKGAGLD. A helical transmembrane segment spans residues 161–179; it reads VKALRAFRVLRPLRLVSGV. At 180-196 the chain is on the cytoplasmic side; it reads PSLQVVLNSIFKAMLPL. Residues 197–218 form a helical membrane-spanning segment; it reads FHIALLVLFMVIIYAIIGLELF. Over 219–279 the chain is Extracellular; the sequence is KGKMHKTCYF…HGITHFDNFG (61 aa). Disulfide bonds link Cys226–Cys254 and Cys245–Cys261. The segment at residues 280–301 is an intramembrane region (pore-forming); sequence FSMLTVYQCISMEGWTDVLYWV. The short motif at 290–293 is the Selectivity filter of repeat I element; it reads SMEG. Residue Glu292 participates in Ca(2+) binding. Topologically, residues 302–309 are extracellular; sequence NDAIGNEW. The chain crosses the membrane as a helical span at residues 310–330; the sequence is PWIYFVTLILLGSFFILNLVL. The Cytoplasmic segment spans residues 331-432; sequence GVLSGEFTKE…WKCHDLVKSK (102 aa). The tract at residues 357–374 is binding to the beta subunit; sequence QQLEEDLRGYMSWITQGE. 2 positions are modified to phosphoserine: Ser393 and Ser397. An II repeat occupies 418 to 664; sequence NRVFRWKCHD…VFLAIAVDNL (247 aa). A helical membrane pass occupies residues 433–451; the sequence is VFYWLVILIVALNTLSIAS. The Extracellular portion of the chain corresponds to 452-462; sequence EHHNQPLWLTH. Residues 463–483 form a helical membrane-spanning segment; it reads LQDVANRVLLALFTIEMLMKM. Over 484–494 the chain is Cytoplasmic; that stretch reads YGLGLRQYFMS. The chain crosses the membrane as a helical span at residues 495–514; that stretch reads IFNRFDCFVVCSGILEILLV. At 515-523 the chain is on the extracellular side; that stretch reads ESGAMTPLG. Residues 524 to 542 traverse the membrane as a helical segment; sequence ISVLRCIRLLRLFKITKYW. At 543 to 561 the chain is on the cytoplasmic side; it reads TSLSNLVASLLNSIRSIAS. A helical transmembrane segment spans residues 562–581; that stretch reads LLLLLFLFMIIFALLGMQLF. Topologically, residues 582–601 are extracellular; sequence GGRYDFEDTEVRRSNFDNFP. Positions 602 to 623 form an intramembrane region, pore-forming; sequence QALISVFQVLTGEDWNSVMYNG. The short motif at 612–615 is the Selectivity filter of repeat II element; that stretch reads TGED. Glu614 contacts Ca(2+). At 624–633 the chain is on the extracellular side; that stretch reads IMAYGGPSYP. A helical membrane pass occupies residues 634 to 653; that stretch reads GVLVCIYFIILFVCGNYILL. Topologically, residues 654 to 799 are cytoplasmic; it reads NVFLAIAVDN…VLCHRIVNAT (146 aa). Disordered stretches follow at residues 673–717 and 731–758; these read AQKA…IPTT and EVKDPYPSADFPGDDEEDEPEIPASPRP. A Phosphoserine; by PKA modification is found at Ser687. Positions 690 to 711 are enriched in basic and acidic residues; that stretch reads LPDKSEEERSTMTKKLEQKPKG. Residues 742–751 show a composition bias toward acidic residues; the sequence is PGDDEEDEPE. The stretch at 786 to 1068 is one III repeat; sequence NKIRVLCHRI…IFVGFVIVTF (283 aa). A helical transmembrane segment spans residues 800-818; that stretch reads WFTNFILLFILLSSAALAA. The Extracellular portion of the chain corresponds to 819–830; sequence EDPIRADSMRNQ. A helical membrane pass occupies residues 831–850; that stretch reads ILEYFDYVFTAVFTVEIVLK. At 851–866 the chain is on the cytoplasmic side; that stretch reads MTTYGAFLHKGSFCRN. Residues 867-885 traverse the membrane as a helical segment; sequence YFNILDLLVVAVSLISMGL. Residues 886 to 892 lie on the Extracellular side of the membrane; the sequence is ESSAISV. A helical membrane pass occupies residues 893–911; it reads VKILRVLRVLRPLRAINRA. At 912 to 930 the chain is on the cytoplasmic side; it reads KGLKHVVQCVFVAIRTIGN. Residues 931 to 950 traverse the membrane as a helical segment; that stretch reads IVLVTTLLQFMFACIGVQLF. The Extracellular segment spans residues 951-1000; it reads KGKFYSCNDLSKMTEEECRGYYYIYKDGDPTQIELRPRQWIHNDFHFDNV. An intrachain disulfide couples Cys957 to Cys968. Residues 988 to 1077 are dihydropyridine binding; it reads RQWIHNDFHF…FQEQGETEYK (90 aa). Residues 1001-1021 constitute an intramembrane region (pore-forming); sequence LSAMMSLFTVSTFEGWPQLLY. Positions 1012–1015 match the Selectivity filter of repeat III motif; sequence TFEG. Position 1014 (Glu1014) interacts with Ca(2+). The Extracellular portion of the chain corresponds to 1022 to 1038; the sequence is KAIDSNEEDTGPVYNNR. A helical membrane pass occupies residues 1039–1060; it reads VEMAIFFIIYIILIAFFMMNIF. Over 1061 to 1118 the chain is Cytoplasmic; sequence VGFVIVTFQEQGETEYKNCELDKNQRQCVQYALKARPLRCYIPKNPYQYQVWYVVTSS. One copy of the IV repeat lies at 1105 to 1384; it reads NPYQYQVWYV…LFVAVIMDNF (280 aa). The chain crosses the membrane as a helical span at residues 1119 to 1140; that stretch reads YFEYLMFALIMLNTICLGMQHY. An N-linked (GlcNAc...) asparagine glycan is attached at Asn1141. Topologically, residues 1141–1148 are extracellular; sequence NQSEQMNH. Residues 1149-1170 traverse the membrane as a helical segment; it reads ISDILNVAFTIIFTLEMILKLI. The Cytoplasmic portion of the chain corresponds to 1171-1180; it reads AFKPRGYFGD. A helical membrane pass occupies residues 1181-1200; that stretch reads PWNVFDFLIVIGSIIDVILS. Over 1201–1231 the chain is Extracellular; that stretch reads EIDTLLASSGGLYCLGGGCGNVDPDESARIS. The helical transmembrane segment at 1232–1250 threads the bilayer; that stretch reads SAFFRLFRVMRLIKLLSRA. Residues 1251-1268 are Cytoplasmic-facing; sequence EGVRTLLWTFIKSFQALP. Residues 1269-1289 traverse the membrane as a helical segment; the sequence is YVALLIVMLFFIYAVIGMQMF. The Extracellular segment spans residues 1290 to 1311; it reads GKIAMVDGTQINRNNNFQTFPQ. The pore-forming intramembrane region spans 1312 to 1330; it reads AVLLLFRCATGEAWQEILL. Positions 1321–1324 match the Selectivity filter of repeat IV motif; sequence TGEA. Residues 1331–1356 lie on the Extracellular side of the membrane; that stretch reads ACSYGKRCDPESDYAPGEEYACGTNF. The tract at residues 1337–1403 is dihydropyridine binding; that stretch reads RCDPESDYAP…LGPHHLDEFK (67 aa). Cys1338 and Cys1352 are disulfide-bonded. The interval 1349 to 1391 is phenylalkylamine binding; it reads EYACGTNFAYYYFISFYMLCAFLIINLFVAVIMDNFDYLTRDW. The helical transmembrane segment at 1357-1381 threads the bilayer; it reads AYYYFISFYMLCAFLIINLFVAVIM. The Cytoplasmic segment spans residues 1382 to 1850; it reads DNFDYLTRDW…PKGGAMPREP (469 aa). An interaction with calmodulin region spans residues 1522–1542; that stretch reads KFYATFLIQEHFRKFMKRQEE. Position 1575 is a phosphoserine; by PKA and CAMK2 (Ser1575). The residue at position 1579 (Thr1579) is a Phosphothreonine. Ser1617 is subject to Phosphoserine; by PKA. The interval 1697 to 1779 is disordered; the sequence is PVTREGPFSQ…FEERVPRNSA (83 aa). Residues 1706 to 1716 are compositionally biased toward polar residues; the sequence is QPCSVSGVNSR. Composition is skewed to basic and acidic residues over residues 1717–1726 and 1745–1756; these read SHVDKLERQM and QEKHPVHEEGKG.

The protein belongs to the calcium channel alpha-1 subunit (TC 1.A.1.11) family. CACNA1S subfamily. As to quaternary structure, component of a calcium channel complex consisting of a pore-forming alpha subunit (CACNA1S) and the ancillary subunits CACNB1 or CACNB2, CACNG1 and CACNA2D1. The channel complex contains alpha, beta, gamma and delta subunits in a 1:1:1:1 ratio, i.e. it contains either CACNB1 or CACNB2. CACNA1S channel activity is modulated by the auxiliary subunits (CACNB1 or CACNB2, CACNG1 and CACNA2D1). Interacts with DYSF and JSRP1. Interacts with RYR1. Interacts with STAC, STAC2 and STAC3 (via their SH3 domains). Interacts with CALM. Post-translationally, the alpha-1S subunit is found in two isoforms in the skeletal muscle: a minor form of 212 kDa containing the complete amino acid sequence, and a major form of 190 kDa derived from the full-length form by post-translational proteolysis close to Phe-1690. Phosphorylated. Phosphorylation by PKA activates the calcium channel. Both the minor and major forms are phosphorylated in vitro by PKA. Phosphorylation at Ser-1575 is involved in beta-adrenergic-mediated regulation of the channel. In terms of tissue distribution, skeletal muscle specific.

The protein resides in the cell membrane. Its subcellular location is the sarcolemma. It is found in the T-tubule. It catalyses the reaction Ca(2+)(in) = Ca(2+)(out). With respect to regulation, channel activity is blocked by dihydropyridines (DHP), phenylalkylamines, and by benzothiazepines. Its function is as follows. Pore-forming, alpha-1S subunit of the voltage-gated calcium channel that gives rise to L-type calcium currents in skeletal muscle. Calcium channels containing the alpha-1S subunit play an important role in excitation-contraction coupling in skeletal muscle via their interaction with RYR1, which triggers Ca(2+) release from the sarcplasmic reticulum and ultimately results in muscle contraction. Long-lasting (L-type) calcium channels belong to the 'high-voltage activated' (HVA) group. This is Voltage-dependent L-type calcium channel subunit alpha-1S (Cacna1s) from Rattus norvegicus (Rat).